A 391-amino-acid chain; its full sequence is Elongation factor Tu (391 aa).

The region spanning 10 to 201 (KPHVNIGTIG…AVDSYIPTPE (192 aa)) is the tr-type G domain. Positions 19–26 (GHVDHGKT) are G1. Position 19-26 (19-26 (GHVDHGKT)) interacts with GTP. Threonine 26 is a binding site for Mg(2+). A G2 region spans residues 55–59 (GITIS). The tract at residues 76 to 79 (DCPG) is G3. Residues 76 to 80 (DCPGH) and 131 to 134 (NKCD) contribute to the GTP site. The tract at residues 131–134 (NKCD) is G4. Residues 169 to 171 (SAL) form a G5 region.

It belongs to the TRAFAC class translation factor GTPase superfamily. Classic translation factor GTPase family. EF-Tu/EF-1A subfamily. As to quaternary structure, monomer.

It localises to the cytoplasm. It catalyses the reaction GTP + H2O = GDP + phosphate + H(+). In terms of biological role, GTP hydrolase that promotes the GTP-dependent binding of aminoacyl-tRNA to the A-site of ribosomes during protein biosynthesis. The polypeptide is Elongation factor Tu (Brucella canis (strain ATCC 23365 / NCTC 10854 / RM-666)).